A 406-amino-acid chain; its full sequence is GTPase Obg (406 aa).

One can recognise an Obg domain in the interval 1-159 (MKFVDEVSIF…RDLKLELKVL (159 aa)). The segment at 126–149 (GNTRFKSSTNRAPRQTTPGKPGES) is disordered. Polar residues predominate over residues 129–143 (RFKSSTNRAPRQTTP). The 174-residue stretch at 160-333 (ADVGLLGLPN…ICRDIMHYLE (174 aa)) folds into the OBG-type G domain. Residues 166–173 (GLPNAGKS), 191–195 (FTTLV), 213–216 (DIPG), 283–286 (NKMD), and 314–316 (SAI) each bind GTP. Mg(2+)-binding residues include Ser173 and Thr193. The disordered stretch occupies residues 376–406 (SGVRSVDDIDEDDDFFDDEDDDGPEIIYVRD). Residues 383–399 (DIDEDDDFFDDEDDDGP) are compositionally biased toward acidic residues.

The protein belongs to the TRAFAC class OBG-HflX-like GTPase superfamily. OBG GTPase family. Monomer. It depends on Mg(2+) as a cofactor.

The protein resides in the cytoplasm. An essential GTPase which binds GTP, GDP and possibly (p)ppGpp with moderate affinity, with high nucleotide exchange rates and a fairly low GTP hydrolysis rate. Plays a role in control of the cell cycle, stress response, ribosome biogenesis and in those bacteria that undergo differentiation, in morphogenesis control. In Ectopseudomonas mendocina (strain ymp) (Pseudomonas mendocina), this protein is GTPase Obg.